Consider the following 337-residue polypeptide: UDP-3-O-acylglucosamine N-acyltransferase 2 (337 aa).

The active-site Proton acceptor is His238.

It belongs to the transferase hexapeptide repeat family. LpxD subfamily. Homotrimer.

The catalysed reaction is a UDP-3-O-[(3R)-3-hydroxyacyl]-alpha-D-glucosamine + a (3R)-hydroxyacyl-[ACP] = a UDP-2-N,3-O-bis[(3R)-3-hydroxyacyl]-alpha-D-glucosamine + holo-[ACP] + H(+). Its pathway is bacterial outer membrane biogenesis; LPS lipid A biosynthesis. Its function is as follows. Catalyzes the N-acylation of UDP-3-O-acylglucosamine using 3-hydroxyacyl-ACP as the acyl donor. Is involved in the biosynthesis of lipid A, a phosphorylated glycolipid that anchors the lipopolysaccharide to the outer membrane of the cell. The sequence is that of UDP-3-O-acylglucosamine N-acyltransferase 2 from Francisella tularensis subsp. tularensis (strain FSC 198).